The following is a 91-amino-acid chain: Acylphosphatase (91 aa).

An Acylphosphatase-like domain is found at 5 to 91 (RLHAIVEGEV…KGEFTSFDTY (87 aa)). Catalysis depends on residues arginine 20 and asparagine 38.

This sequence belongs to the acylphosphatase family.

It carries out the reaction an acyl phosphate + H2O = a carboxylate + phosphate + H(+). The protein is Acylphosphatase (acyP) of Metallosphaera sedula (strain ATCC 51363 / DSM 5348 / JCM 9185 / NBRC 15509 / TH2).